A 718-amino-acid polypeptide reads, in one-letter code: K(+)-insensitive pyrophosphate-energized proton pump (718 aa).

6 helical membrane passes run 6-26, 61-81, 83-103, 112-132, 133-153, and 168-188; these read AVLV…IWAI, IAIV…LNAA, GFLI…HVSV, AASL…AITG, LLVA…LTVW, and VSLG…GGIF. Position 190 (Lys-190) interacts with substrate. Asp-193, Asp-197, Asn-220, and Asp-223 together coordinate Mg(2+). The next 6 helical transmembrane spans lie at 235–255, 265–285, 300–320, 335–355, 385–405, and 413–433; these read LFET…IFFH, LYPL…TFFV, GLIA…TLTV, GTNL…IVVI, GLAV…GGII, and LFGT…IVAL. Asp-441 contributes to the Mg(2+) binding site. 4 consecutive transmembrane segments (helical) span residues 472–492, 524–544, 593–613, and 620–640; these read AVTK…LFAA, YVVA…GMAM, IIPS…VLLI, and AFAA…FVAI. Ca(2+) contacts are provided by Asp-650, Asp-682, and Asp-686. Lys-689 contacts substrate. The chain crosses the membrane as a helical span at residues 695–715; the sequence is AVNPAIKITNIVALLLLAVLA.

The protein belongs to the H(+)-translocating pyrophosphatase (TC 3.A.10) family. K(+)-insensitive subfamily. In terms of assembly, homodimer. Mg(2+) serves as cofactor.

The protein resides in the cell inner membrane. The catalysed reaction is diphosphate + H2O + H(+)(in) = 2 phosphate + 2 H(+)(out). In terms of biological role, proton pump that utilizes the energy of pyrophosphate hydrolysis as the driving force for proton movement across the membrane. Generates a proton motive force. The chain is K(+)-insensitive pyrophosphate-energized proton pump from Brucella melitensis biotype 1 (strain ATCC 23456 / CCUG 17765 / NCTC 10094 / 16M).